The primary structure comprises 504 residues: Pre-mRNA-processing factor 19 (504 aa).

Ser2 is modified (N-acetylserine). Positions 2–73 constitute a U-box domain; the sequence is SLICSISNEV…KPPSATSIPA (72 aa). The tract at residues 68 to 223 is may mediate interaction with PSMC5; the sequence is ATSIPAILKA…VGLHSASIPG (156 aa). Lys122, Lys179, Lys244, and Lys261 each carry N6-acetyllysine. The stretch at 219-259 is one WD 1 repeat; the sequence is ASIPGILALDLCPSDTNKILTGGADKNVVVFDKSSEQILAT. WD repeat units lie at residues 262–301, 304–345, 348–387, 390–429, 433–472, and 473–503; these read GHTK…CVQV, AHES…TKVT, TSGC…NVAN, GHSG…NFKT, DNNF…LHFT, and EHSG…KFYS.

This sequence belongs to the WD repeat PRP19 family. Homotetramer. Component of activated, catalytic and post-catalytic spliceosomes. Component of the Prp19 complex/PRP19C/Nineteen complex/NTC and related complexes described as PRP19-CDC5L splicing complex and PSO4 complex. A homotetramer of PRPF19, CDC5L, PLRG1 and BCAS2 constitute the core of those complexes. The interaction with CDC5L, PLRG1 and BCAS2 is direct within this core complex. At least three less stably associated proteins CTNNBL1, CWC15 and HSPA8 are found in the Prp19 complex. The Prp19 complex associates with the spliceosome during its assembly and remodeling recruiting additional proteins. Component of the XAB2 complex, a multimeric protein complex composed of XAB2, PRPF19, AQR, ZNF830, ISY1, and PPIE. Interacts with CWC22 and EIF4A3 in an RNA-independent manner. Interacts with RPA1 and RPA2; the PRP19-CDC5L complex is recruited to the sites of DNA repair where it interacts with the replication protein A complex (RPA). Interacts with SETMAR; required for SETMAR recruitment to site of DNA damage. Interacts with U2AF2; the interaction is direct and recruits the Prp19 complex to RNA polymerase II C-terminal domain (CTD) and the pre-mRNA. Interacts with PRPF3. Interacts with APEX1, DNTT and PSMB4. Interacts with PSMC5. Interacts with KNSTRN. Interacts (via N-terminus) with CDC5L. Interacts with KHDC4. Interacts with USB1. Interacts with DDX41. As to expression, ubiquitous. Weakly expressed in senescent cells of different tissue origins. Highly expressed in tumor cell lines.

It is found in the nucleus. The protein localises to the nucleoplasm. The protein resides in the cytoplasm. Its subcellular location is the cytoskeleton. It localises to the spindle. It is found in the lipid droplet. The enzyme catalyses S-ubiquitinyl-[E2 ubiquitin-conjugating enzyme]-L-cysteine + [acceptor protein]-L-lysine = [E2 ubiquitin-conjugating enzyme]-L-cysteine + N(6)-ubiquitinyl-[acceptor protein]-L-lysine.. It functions in the pathway protein modification; protein ubiquitination. Ubiquitin-protein ligase which is a core component of several complexes mainly involved pre-mRNA splicing and DNA repair. Required for pre-mRNA splicing as component of the spliceosome. Core component of the PRP19C/Prp19 complex/NTC/Nineteen complex which is part of the spliceosome and participates in its assembly, its remodeling and is required for its activity. During assembly of the spliceosome, mediates 'Lys-63'-linked polyubiquitination of the U4 spliceosomal protein PRPF3. Ubiquitination of PRPF3 allows its recognition by the U5 component PRPF8 and stabilizes the U4/U5/U6 tri-snRNP spliceosomal complex. Recruited to RNA polymerase II C-terminal domain (CTD) and the pre-mRNA, it may also couple the transcriptional and spliceosomal machineries. The XAB2 complex, which contains PRPF19, is also involved in pre-mRNA splicing, transcription and transcription-coupled repair. Beside its role in pre-mRNA splicing PRPF19, as part of the PRP19-CDC5L complex, plays a role in the DNA damage response/DDR. It is recruited to the sites of DNA damage by the RPA complex where PRPF19 directly ubiquitinates RPA1 and RPA2. 'Lys-63'-linked polyubiquitination of the RPA complex allows the recruitment of the ATR-ATRIP complex and the activation of ATR, a master regulator of the DNA damage response. May also play a role in DNA double-strand break (DSB) repair by recruiting the repair factor SETMAR to altered DNA. As part of the PSO4 complex may also be involved in the DNA interstrand cross-links/ICLs repair process. In addition, may also mediate 'Lys-48'-linked polyubiquitination of substrates and play a role in proteasomal degradation. May play a role in the biogenesis of lipid droplets. May play a role in neural differentiation possibly through its function as part of the spliceosome. The chain is Pre-mRNA-processing factor 19 from Homo sapiens (Human).